The following is a 159-amino-acid chain: uncharacterized protein (159 aa).

This is an uncharacterized protein from Acanthamoeba polyphaga (Amoeba).